The primary structure comprises 100 residues: Esterase PE11 (100 aa).

The PE domain maps to 4 to 94 (VTTRPDSIGE…TSYWLTELAN (91 aa)).

Belongs to the mycobacterial PE family.

The protein localises to the secreted. It is found in the cell wall. It carries out the reaction an acetyl ester + H2O = an aliphatic alcohol + acetate + H(+). The catalysed reaction is a butanoate ester + H2O = an aliphatic alcohol + butanoate + H(+). The enzyme catalyses an octanoate ester + H2O = an aliphatic alcohol + octanoate + H(+). In terms of biological role, involved in cell wall lipids remodeling and in virulence. Restricts the biofilm growth and is essential for the optimal intracellular survival of M.tuberculosis. Shows esterase activity with a preference for short-chain esters, particularly pNP-acetate (C2) and pNP-butyrate (C4). Has weaker activity with pNP-octanoate (C8), pNP-laurate (C12) and pNP-myristate (C14). Shows weak long-chain triacylglycerol (TAG) hydrolase activity in vitro. Not necessary for PPE17 stability or for its localization on the mycobacterial surface. The sequence is that of Esterase PE11 from Mycobacterium tuberculosis (strain ATCC 25618 / H37Rv).